The sequence spans 210 residues: LexA repressor (210 aa).

The segment at residues 29–49 is a DNA-binding region (H-T-H motif); the sequence is VREIGEAVDLSSTSTVHGHIS. Active-site for autocatalytic cleavage activity residues include S130 and K168.

This sequence belongs to the peptidase S24 family. Homodimer.

It catalyses the reaction Hydrolysis of Ala-|-Gly bond in repressor LexA.. Its function is as follows. Represses a number of genes involved in the response to DNA damage (SOS response), including recA and lexA. In the presence of single-stranded DNA, RecA interacts with LexA causing an autocatalytic cleavage which disrupts the DNA-binding part of LexA, leading to derepression of the SOS regulon and eventually DNA repair. The chain is LexA repressor from Lactiplantibacillus plantarum (strain ATCC BAA-793 / NCIMB 8826 / WCFS1) (Lactobacillus plantarum).